The following is a 456-amino-acid chain: MSSQIKQVFARQILDSRGNPTVEVDVVLESGAFGRAAVPSGASTGIREALELRDGNKALFIGKSVYKAVENVNTKIAQAVKGLDALDQRLIDKTMIELDGSENKKNLGANAILGVSLATARAAASHLRKPFYRYLMDVKEYLMPVPMMNVINGGSHADNNVDMQEFMIVPAGFDTFSEALRCGTEVFHTLKKVLIADGYSVAGVGDEGGYAPDLPSNEAAIEAILKAVKEAGYEPGKHVFIALDPASSEFYKDGKYELKSENKSLTTEEMIDYYAAWVEKYPIVSIEDGLAEEDWAGWKLLTEKLGNKVQLVGDDLFVTNPSILAKGIEKGIANSILIKLNQIGTLTETFEAMAMAGQAGYTCVVSHRSGETSDTIIADLAVATCSGQIKTGSLSRSDRIAKYNQLLRIEEELGENAIYPGIKAFVFNSDEEVEEVVQEIIVEDSEAEKVVVQVEE.

Gln164 contributes to the (2R)-2-phosphoglycerate binding site. Glu207 functions as the Proton donor in the catalytic mechanism. Positions 244, 287, and 314 each coordinate Mg(2+). (2R)-2-phosphoglycerate-binding residues include Lys339, Arg368, Ser369, and Lys390. The active-site Proton acceptor is Lys339.

The protein belongs to the enolase family. As to quaternary structure, component of the RNA degradosome, a multiprotein complex involved in RNA processing and mRNA degradation. Requires Mg(2+) as cofactor.

It localises to the cytoplasm. The protein resides in the secreted. Its subcellular location is the cell surface. It catalyses the reaction (2R)-2-phosphoglycerate = phosphoenolpyruvate + H2O. It functions in the pathway carbohydrate degradation; glycolysis; pyruvate from D-glyceraldehyde 3-phosphate: step 4/5. Its function is as follows. Catalyzes the reversible conversion of 2-phosphoglycerate (2-PG) into phosphoenolpyruvate (PEP). It is essential for the degradation of carbohydrates via glycolysis. This chain is Enolase, found in Francisella tularensis subsp. holarctica (strain LVS).